Here is a 323-residue protein sequence, read N- to C-terminus: tRNA dimethylallyltransferase (323 aa).

Gly-12 to Thr-19 provides a ligand contact to ATP. Thr-14 to Thr-19 contributes to the substrate binding site. Interaction with substrate tRNA stretches follow at residues Asp-37–Leu-40 and Gln-161–Arg-165.

It belongs to the IPP transferase family. Monomer. Mg(2+) serves as cofactor.

It catalyses the reaction adenosine(37) in tRNA + dimethylallyl diphosphate = N(6)-dimethylallyladenosine(37) in tRNA + diphosphate. Catalyzes the transfer of a dimethylallyl group onto the adenine at position 37 in tRNAs that read codons beginning with uridine, leading to the formation of N6-(dimethylallyl)adenosine (i(6)A). This chain is tRNA dimethylallyltransferase, found in Pseudomonas aeruginosa (strain LESB58).